The primary structure comprises 614 residues: Dihydroxy-acid dehydratase (614 aa).

Position 81 (aspartate 81) interacts with Mg(2+). Cysteine 122 is a binding site for [2Fe-2S] cluster. Mg(2+)-binding residues include aspartate 123 and lysine 124. Lysine 124 carries the N6-carboxylysine modification. Cysteine 193 is a [2Fe-2S] cluster binding site. Glutamate 489 provides a ligand contact to Mg(2+). Residue serine 515 is the Proton acceptor of the active site.

Belongs to the IlvD/Edd family. In terms of assembly, homodimer. [2Fe-2S] cluster serves as cofactor. The cofactor is Mg(2+).

The catalysed reaction is (2R)-2,3-dihydroxy-3-methylbutanoate = 3-methyl-2-oxobutanoate + H2O. It catalyses the reaction (2R,3R)-2,3-dihydroxy-3-methylpentanoate = (S)-3-methyl-2-oxopentanoate + H2O. It participates in amino-acid biosynthesis; L-isoleucine biosynthesis; L-isoleucine from 2-oxobutanoate: step 3/4. It functions in the pathway amino-acid biosynthesis; L-valine biosynthesis; L-valine from pyruvate: step 3/4. Its function is as follows. Functions in the biosynthesis of branched-chain amino acids. Catalyzes the dehydration of (2R,3R)-2,3-dihydroxy-3-methylpentanoate (2,3-dihydroxy-3-methylvalerate) into 2-oxo-3-methylpentanoate (2-oxo-3-methylvalerate) and of (2R)-2,3-dihydroxy-3-methylbutanoate (2,3-dihydroxyisovalerate) into 2-oxo-3-methylbutanoate (2-oxoisovalerate), the penultimate precursor to L-isoleucine and L-valine, respectively. The sequence is that of Dihydroxy-acid dehydratase from Cellvibrio japonicus (strain Ueda107) (Pseudomonas fluorescens subsp. cellulosa).